Consider the following 905-residue polypeptide: Probable coatomer subunit gamma (905 aa).

HEAT repeat units lie at residues 265-302 (TQFR…NISD), 303-340 (DDLQ…TRPH), 374-412 (DESV…KFPR), 414-450 (QDSM…YIPE), and 525-563 (KFVQ…RDAF). Ser-604 carries the post-translational modification Phosphoserine.

Belongs to the COPG family. Oligomeric complex that consists of at least the alpha, beta, beta', gamma, delta, epsilon and zeta subunits.

Its subcellular location is the cytoplasm. It localises to the golgi apparatus membrane. It is found in the cytoplasmic vesicle. The protein localises to the COPI-coated vesicle membrane. Its function is as follows. The coatomer is a cytosolic protein complex that binds to dilysine motifs and reversibly associates with Golgi non-clathrin-coated vesicles, which further mediate biosynthetic protein transport from the ER, via the Golgi up to the trans Golgi network. Coatomer complex is required for budding from Golgi membranes, and is essential for the retrograde Golgi-to-ER transport of dilysine-tagged proteins. The protein is Probable coatomer subunit gamma (sec21) of Schizosaccharomyces pombe (strain 972 / ATCC 24843) (Fission yeast).